The chain runs to 291 residues: U3 small nucleolar ribonucleoprotein protein IMP4 (291 aa).

A Brix domain is found at 83–264 (PKVMITTSRD…LYMIRLGTLE (182 aa)).

As to quaternary structure, part of the small subunit (SSU) processome, composed of more than 70 proteins and the RNA chaperone small nucleolar RNA (snoRNA) U3. Component of a heterotrimeric complex containing IMP3, IMP4 and MPHOSPH10. Interacts with MPHOSPH10.

The protein localises to the nucleus. It localises to the nucleolus. Functionally, component of the 60-80S U3 small nucleolar ribonucleoprotein (U3 snoRNP). Required for the early cleavages during pre-18S ribosomal RNA processing. Part of the small subunit (SSU) processome, first precursor of the small eukaryotic ribosomal subunit. During the assembly of the SSU processome in the nucleolus, many ribosome biogenesis factors, an RNA chaperone and ribosomal proteins associate with the nascent pre-rRNA and work in concert to generate RNA folding, modifications, rearrangements and cleavage as well as targeted degradation of pre-ribosomal RNA by the RNA exosome. This Homo sapiens (Human) protein is U3 small nucleolar ribonucleoprotein protein IMP4.